Consider the following 250-residue polypeptide: tRNA (guanine-N(1)-)-methyltransferase (250 aa).

S-adenosyl-L-methionine-binding positions include G115 and 135 to 140 (LGDFVL).

The protein belongs to the RNA methyltransferase TrmD family. In terms of assembly, homodimer.

It is found in the cytoplasm. It catalyses the reaction guanosine(37) in tRNA + S-adenosyl-L-methionine = N(1)-methylguanosine(37) in tRNA + S-adenosyl-L-homocysteine + H(+). Its function is as follows. Specifically methylates guanosine-37 in various tRNAs. The polypeptide is tRNA (guanine-N(1)-)-methyltransferase (Legionella pneumophila subsp. pneumophila (strain Philadelphia 1 / ATCC 33152 / DSM 7513)).